The sequence spans 220 residues: Iron-sulfur cluster repair protein YtfE (220 aa).

The protein belongs to the RIC family. YtfE subfamily. As to quaternary structure, homodimer.

Its subcellular location is the cytoplasm. In terms of biological role, di-iron-containing protein involved in the repair of iron-sulfur clusters damaged by oxidative and nitrosative stress conditions. The protein is Iron-sulfur cluster repair protein YtfE of Escherichia coli O157:H7.